We begin with the raw amino-acid sequence, 62 residues long: Potassium channel toxin alpha-KTx Tx773 (62 aa).

The first 18 residues, 1–18 (MQKLFIVLLLFCILRLDA), serve as a signal peptide directing secretion. Disulfide bonds link Cys-28–Cys-46, Cys-33–Cys-59, and Cys-37–Cys-61.

The protein belongs to the short scorpion toxin superfamily. Potassium channel inhibitor family. Alpha-KTx 23 subfamily. As to expression, expressed by the venom gland.

It is found in the secreted. In terms of biological role, may block potassium channels. The protein is Potassium channel toxin alpha-KTx Tx773 of Buthus israelis (Israeli scorpion).